We begin with the raw amino-acid sequence, 394 residues long: GTPase Era, mitochondrial (394 aa).

The Era-type G domain occupies 32–280; it reads KCLQLAVIGA…RDHLMSISPQ (249 aa). Residues 40-47 are G1; sequence GAPNVGKS. 40–47 serves as a coordination point for GTP; that stretch reads GAPNVGKS. A G2 region spans residues 66–70; it reads DTTTR. The interval 87–90 is G3; sequence DSPG. GTP contacts are provided by residues 87 to 91 and 160 to 163; these read DSPGA and NKID. Residues 160–163 are G4; sequence NKID. Residues 259–261 form a G5 region; the sequence is VSS.

Belongs to the TRAFAC class TrmE-Era-EngA-EngB-Septin-like GTPase superfamily. Era GTPase family.

The protein resides in the mitochondrion matrix. Its subcellular location is the mitochondrion inner membrane. Functionally, probable GTPase that plays a role in the mitochondrial ribosomal small subunit assembly. Specifically binds the 12S mitochondrial rRNA (12S mt-rRNA) to a 33 nucleotide section delineating the 3' terminal stem-loop region. May act as a chaperone that protects the 12S mt-rRNA on the 28S mitoribosomal subunit during ribosomal small subunit assembly. May play a role in positively regulating mitochondrial function. Plays a role in fertility. This chain is GTPase Era, mitochondrial, found in Caenorhabditis elegans.